The following is a 203-amino-acid chain: Holliday junction branch migration complex subunit RuvA (203 aa).

The domain I stretch occupies residues methionine 1–threonine 63. Residues aspartate 64–alanine 142 form a domain II region. Residues glutamine 143–valine 150 are flexible linker. Positions valine 150–asparagine 203 are domain III.

The protein belongs to the RuvA family. In terms of assembly, homotetramer. Forms an RuvA(8)-RuvB(12)-Holliday junction (HJ) complex. HJ DNA is sandwiched between 2 RuvA tetramers; dsDNA enters through RuvA and exits via RuvB. An RuvB hexamer assembles on each DNA strand where it exits the tetramer. Each RuvB hexamer is contacted by two RuvA subunits (via domain III) on 2 adjacent RuvB subunits; this complex drives branch migration. In the full resolvosome a probable DNA-RuvA(4)-RuvB(12)-RuvC(2) complex forms which resolves the HJ.

Its subcellular location is the cytoplasm. Its function is as follows. The RuvA-RuvB-RuvC complex processes Holliday junction (HJ) DNA during genetic recombination and DNA repair, while the RuvA-RuvB complex plays an important role in the rescue of blocked DNA replication forks via replication fork reversal (RFR). RuvA specifically binds to HJ cruciform DNA, conferring on it an open structure. The RuvB hexamer acts as an ATP-dependent pump, pulling dsDNA into and through the RuvAB complex. HJ branch migration allows RuvC to scan DNA until it finds its consensus sequence, where it cleaves and resolves the cruciform DNA. This chain is Holliday junction branch migration complex subunit RuvA, found in Corynebacterium diphtheriae (strain ATCC 700971 / NCTC 13129 / Biotype gravis).